A 292-amino-acid chain; its full sequence is Diaminopimelate epimerase (292 aa).

Substrate contacts are provided by asparagine 14 and asparagine 81. Residue cysteine 90 is the Proton donor of the active site. Residues glycine 91–asparagine 92, asparagine 166, asparagine 202, and glutamate 220–arginine 221 contribute to the substrate site. Cysteine 229 functions as the Proton acceptor in the catalytic mechanism. Position 230–231 (glycine 230–threonine 231) interacts with substrate.

This sequence belongs to the diaminopimelate epimerase family. As to quaternary structure, homodimer.

It localises to the cytoplasm. It catalyses the reaction (2S,6S)-2,6-diaminopimelate = meso-2,6-diaminopimelate. The protein operates within amino-acid biosynthesis; L-lysine biosynthesis via DAP pathway; DL-2,6-diaminopimelate from LL-2,6-diaminopimelate: step 1/1. Functionally, catalyzes the stereoinversion of LL-2,6-diaminopimelate (L,L-DAP) to meso-diaminopimelate (meso-DAP), a precursor of L-lysine and an essential component of the bacterial peptidoglycan. This Rhodococcus erythropolis (strain PR4 / NBRC 100887) protein is Diaminopimelate epimerase.